Here is a 291-residue protein sequence, read N- to C-terminus: Beta-lactamase CTX-M-25 (291 aa).

The N-terminal stretch at 1–30 (MMRKSVRRAMLMTTACVSLLLASVPLCAQA) is a signal peptide. Ser73 functions as the Nucleophile; acyl-ester intermediate in the catalytic mechanism. Residues Lys76, Ser133, Glu169, and Ser240 each contribute to the a beta-lactam site.

Belongs to the class-A beta-lactamase family. In terms of assembly, monomer.

The protein resides in the secreted. It catalyses the reaction a beta-lactam + H2O = a substituted beta-amino acid. Inhibited by the beta-lactamase-blocking agents clavulanic acid and tazobactam; in the DH10B strain. Its function is as follows. Extended-spectrum beta-lactamase (ESBL) which confers resistance to penicillins, as well as first, second and third-generation cephalosporins. Has cefotaxime-hydrolyzing activity. Inactive against cephalosporin antibiotic, cefoxitin, and the carbapenem, imipenem. This is Beta-lactamase CTX-M-25 from Escherichia coli.